We begin with the raw amino-acid sequence, 1770 residues long: Transposon Ty2-F Gag-Pol polyprotein (1770 aa).

Polar residues-rich tracts occupy residues Met1–His11, Ala19–Asn39, and Lys49–Thr60. Disordered regions lie at residues Met1–Gln86 and Gln359–His453. Positions Glu295–His397 are RNA-binding. Over residues Thr369–Arg381 the composition is skewed to low complexity. Polar residues-rich tracts occupy residues Ile399–Val408 and Glu415–Gln435. Asp457 acts as the For protease activity; shared with dimeric partner in catalysis. Residues Asn579 to Cys636 are integrase-type zinc finger-like. One can recognise an Integrase catalytic domain in the interval Glu656–Pro831. Asp667 and Asp732 together coordinate Mg(2+). Disordered regions lie at residues Met1004 to Glu1034, Thr1059 to Lys1135, Leu1146 to Asp1165, and His1170 to Glu1205. Composition is skewed to polar residues over residues Glu1009 to Glu1034 and Gln1065 to Ser1082. Basic and acidic residues predominate over residues Leu1151–Asp1165. The short motif at Lys1193–Arg1227 is the Bipartite nuclear localization signal element. The Reverse transcriptase Ty1/copia-type domain maps to Asn1353–Gln1491. The Mg(2+) site is built by Asp1361, Asp1442, Asp1443, Asp1625, Glu1667, and Asp1700. Residues Asp1625 to Lys1767 form the RNase H Ty1/copia-type domain.

As to quaternary structure, the capsid protein forms a homotrimer, from which the VLPs are assembled. The protease is a homodimer, whose active site consists of two apposed aspartic acid residues. Initially, virus-like particles (VLPs) are composed of the structural unprocessed proteins Gag and Gag-Pol, and also contain the host initiator methionine tRNA (tRNA(i)-Met) which serves as a primer for minus-strand DNA synthesis, and a dimer of genomic Ty RNA. Processing of the polyproteins occurs within the particle and proceeds by an ordered pathway, called maturation. First, the protease (PR) is released by autocatalytic cleavage of the Gag-Pol polyprotein, and this cleavage is a prerequisite for subsequent processing at the remaining sites to release the mature structural and catalytic proteins. Maturation takes place prior to the RT reaction and is required to produce transposition-competent VLPs.

It is found in the cytoplasm. The protein resides in the nucleus. It catalyses the reaction DNA(n) + a 2'-deoxyribonucleoside 5'-triphosphate = DNA(n+1) + diphosphate. It carries out the reaction Endonucleolytic cleavage to 5'-phosphomonoester.. Functionally, capsid protein (CA) is the structural component of the virus-like particle (VLP), forming the shell that encapsulates the retrotransposons dimeric RNA genome. The particles are assembled from trimer-clustered units and there are holes in the capsid shells that allow for the diffusion of macromolecules. CA also has nucleocapsid-like chaperone activity, promoting primer tRNA(i)-Met annealing to the multipartite primer-binding site (PBS), dimerization of Ty2 RNA and initiation of reverse transcription. Its function is as follows. The aspartyl protease (PR) mediates the proteolytic cleavages of the Gag and Gag-Pol polyproteins after assembly of the VLP. Reverse transcriptase/ribonuclease H (RT) is a multifunctional enzyme that catalyzes the conversion of the retro-elements RNA genome into dsDNA within the VLP. The enzyme displays a DNA polymerase activity that can copy either DNA or RNA templates, and a ribonuclease H (RNase H) activity that cleaves the RNA strand of RNA-DNA heteroduplexes during plus-strand synthesis and hydrolyzes RNA primers. The conversion leads to a linear dsDNA copy of the retrotransposon that includes long terminal repeats (LTRs) at both ends. In terms of biological role, integrase (IN) targets the VLP to the nucleus, where a subparticle preintegration complex (PIC) containing at least integrase and the newly synthesized dsDNA copy of the retrotransposon must transit the nuclear membrane. Once in the nucleus, integrase performs the integration of the dsDNA into the host genome. The polypeptide is Transposon Ty2-F Gag-Pol polyprotein (TY2B-F) (Saccharomyces cerevisiae (strain ATCC 204508 / S288c) (Baker's yeast)).